Reading from the N-terminus, the 787-residue chain is Endonuclease MutS2 (787 aa).

336–343 (GPNTGGKT) is an ATP binding site. One can recognise a Smr domain in the interval 712–787 (LDLRGVRYED…GNGATEVQFK (76 aa)).

The protein belongs to the DNA mismatch repair MutS family. MutS2 subfamily. Homodimer. Binds to stalled ribosomes, contacting rRNA.

Endonuclease that is involved in the suppression of homologous recombination and thus may have a key role in the control of bacterial genetic diversity. Functionally, acts as a ribosome collision sensor, splitting the ribosome into its 2 subunits. Detects stalled/collided 70S ribosomes which it binds and splits by an ATP-hydrolysis driven conformational change. Acts upstream of the ribosome quality control system (RQC), a ribosome-associated complex that mediates the extraction of incompletely synthesized nascent chains from stalled ribosomes and their subsequent degradation. Probably generates substrates for RQC. The chain is Endonuclease MutS2 from Lactiplantibacillus plantarum (strain ATCC BAA-793 / NCIMB 8826 / WCFS1) (Lactobacillus plantarum).